The primary structure comprises 144 residues: Large ribosomal subunit protein eL27 (144 aa).

The 38-residue stretch at 6–43 (IKPGRLVILLNGKYAGRKAVVIKTFDDATASKSRPYGH) folds into the KOW domain.

It belongs to the eukaryotic ribosomal protein eL27 family.

The chain is Large ribosomal subunit protein eL27 (rpl27) from Dictyostelium discoideum (Social amoeba).